The chain runs to 548 residues: MKHLHDLPAWSKLWNHFDDSKTLHMREMFEQDPQRAERYWLQVGGLTLDYSKNRINDETMSLLFELAHEAGVPERMRQMFHGKKINTTENRAVLHVALRNRTNSPIVVDGEDVMPKVNRVLQRMGEFAHEVRSGSWLGYTNQVITDVVNIGIGGSDLGPLMMCTALKPFGHPRLNMHFVSNVDGSQLRDVLSKVHPETTLFIIASKTFTTQETLTNALTAREWFLNHAGDEEAVAKHFAAVSTNQKAVAEFGIDTANMFEFWDWVGGRYSLWSAIGLPIMLYLGEENFIEMLNGAHLMDQHFINTPLERNLPVILALIGIWYINYYGGGSHVIAPYDQHLHRLPKFIQQLDMESNGKQVTLDGKAVGHETSPIIWGETGINGQHAFFQLLHQGTHITPIDLIASLEKRSNLPGHHEILLANVFAQAEAFMRGKTPDEVRAELKAQGMDEARIEELVPHKTFSGNRPTNLILMDKVNPRNMGSLIAMYEHKTFVQGIIWGINSFDQWGVELGKQLAKTILGELTGETGSQKHDSSTERLINLYLQTNRK.

The active-site Proton donor is E353. Catalysis depends on residues H384 and K512.

It belongs to the GPI family.

It is found in the cytoplasm. It carries out the reaction alpha-D-glucose 6-phosphate = beta-D-fructose 6-phosphate. It participates in carbohydrate biosynthesis; gluconeogenesis. It functions in the pathway carbohydrate degradation; glycolysis; D-glyceraldehyde 3-phosphate and glycerone phosphate from D-glucose: step 2/4. Catalyzes the reversible isomerization of glucose-6-phosphate to fructose-6-phosphate. In Neisseria meningitidis serogroup A / serotype 4A (strain DSM 15465 / Z2491), this protein is Glucose-6-phosphate isomerase 1.